Consider the following 206-residue polypeptide: Large ribosomal subunit protein uL4 (206 aa).

The interval T60–G84 is disordered. Basic residues predominate over residues F64–S76.

The protein belongs to the universal ribosomal protein uL4 family. Part of the 50S ribosomal subunit.

One of the primary rRNA binding proteins, this protein initially binds near the 5'-end of the 23S rRNA. It is important during the early stages of 50S assembly. It makes multiple contacts with different domains of the 23S rRNA in the assembled 50S subunit and ribosome. Functionally, forms part of the polypeptide exit tunnel. In Rhodospirillum rubrum (strain ATCC 11170 / ATH 1.1.1 / DSM 467 / LMG 4362 / NCIMB 8255 / S1), this protein is Large ribosomal subunit protein uL4.